A 105-amino-acid polypeptide reads, in one-letter code: Small ribosomal subunit protein eS10A (105 aa).

This sequence belongs to the eukaryotic ribosomal protein eS10 family. Component of the small ribosomal subunit (SSU). Mature yeast ribosomes consist of a small (40S) and a large (60S) subunit. The 40S small subunit contains 1 molecule of ribosomal RNA (18S rRNA) and 33 different proteins (encoded by 57 genes). The large 60S subunit contains 3 rRNA molecules (25S, 5.8S and 5S rRNA) and 46 different proteins (encoded by 81 genes). eS10 interacts with GCN1 (via middle region); this interaction is direct and promotes GCN2 kinase activity. In terms of processing, the N-terminus is not modified.

The protein resides in the cytoplasm. Its function is as follows. Component of the ribosome, a large ribonucleoprotein complex responsible for the synthesis of proteins in the cell. The small ribosomal subunit (SSU) binds messenger RNAs (mRNAs) and translates the encoded message by selecting cognate aminoacyl-transfer RNA (tRNA) molecules. The large subunit (LSU) contains the ribosomal catalytic site termed the peptidyl transferase center (PTC), which catalyzes the formation of peptide bonds, thereby polymerizing the amino acids delivered by tRNAs into a polypeptide chain. The nascent polypeptides leave the ribosome through a tunnel in the LSU and interact with protein factors that function in enzymatic processing, targeting, and the membrane insertion of nascent chains at the exit of the ribosomal tunnel. eS10 plays a role as a positive regulator of the GCN2 kinase activity by stimulating GCN1-mediated GCN2 activation. The protein is Small ribosomal subunit protein eS10A of Saccharomyces cerevisiae (strain ATCC 204508 / S288c) (Baker's yeast).